Here is a 351-residue protein sequence, read N- to C-terminus: Fe-S cluster assembly protein DRE2 (351 aa).

Positions 1 to 151 (MATTGRVLLL…KPDIGAQQAI (151 aa)) are N-terminal SAM-like domain. The segment at 93-118 (RNRENKPWGLSDGNGNNANSSRRYND) is disordered. A compositionally biased stretch (polar residues) spans 105–114 (GNGNNANSSR). Residues 152 to 243 (PLKLGRRRKE…EDELLDEDDM (92 aa)) form a linker region. [2Fe-2S] cluster is bound by residues C253, C264, C267, and C269. Positions 253-269 (CRPKPGKRRRACKDCSC) are fe-S binding site A. [4Fe-4S] cluster-binding residues include C314, C317, C325, and C328. 2 consecutive short sequence motifs (cx2C motif) follow at residues 314-317 (CGNC) and 325-328 (CDGC). Residues 314–328 (CGNCSLGDAFRCDGC) form a fe-S binding site B region.

This sequence belongs to the anamorsin family. Monomer. Interacts with TAH18. Interacts with MIA40. The cofactor is [2Fe-2S] cluster. Requires [4Fe-4S] cluster as cofactor.

The protein resides in the cytoplasm. It localises to the mitochondrion intermembrane space. Functionally, component of the cytosolic iron-sulfur (Fe-S) protein assembly (CIA) machinery required for the maturation of extramitochondrial Fe-S proteins. Part of an electron transfer chain functioning in an early step of cytosolic Fe-S biogenesis, facilitating the de novo assembly of a [4Fe-4S] cluster on the scaffold complex CFD1-NBP35. Electrons are transferred to DRE2 from NADPH via the FAD- and FMN-containing protein TAH18. TAH18-DRE2 are also required for the assembly of the diferric tyrosyl radical cofactor of ribonucleotide reductase (RNR), probably by providing electrons for reduction during radical cofactor maturation in the catalytic small subunit RNR2. This chain is Fe-S cluster assembly protein DRE2, found in Ajellomyces capsulatus (strain H143) (Darling's disease fungus).